The primary structure comprises 207 residues: Ribonuclease HII (207 aa).

Residues 12 to 201 (DLVAGVDEVG…VRAAWEVREG (190 aa)) form the RNase H type-2 domain. A divalent metal cation contacts are provided by Asp18, Glu19, and Asp110.

Belongs to the RNase HII family. Mn(2+) serves as cofactor. The cofactor is Mg(2+).

The protein localises to the cytoplasm. It catalyses the reaction Endonucleolytic cleavage to 5'-phosphomonoester.. Functionally, endonuclease that specifically degrades the RNA of RNA-DNA hybrids. The sequence is that of Ribonuclease HII from Pseudomonas putida (strain ATCC 700007 / DSM 6899 / JCM 31910 / BCRC 17059 / LMG 24140 / F1).